We begin with the raw amino-acid sequence, 139 residues long: Holo-[acyl-carrier-protein] synthase (139 aa).

2 residues coordinate Mg(2+): D8 and E61.

This sequence belongs to the P-Pant transferase superfamily. AcpS family. Mg(2+) serves as cofactor.

The protein localises to the cytoplasm. It catalyses the reaction apo-[ACP] + CoA = holo-[ACP] + adenosine 3',5'-bisphosphate + H(+). Its function is as follows. Transfers the 4'-phosphopantetheine moiety from coenzyme A to a Ser of acyl-carrier-protein. In Nitrobacter hamburgensis (strain DSM 10229 / NCIMB 13809 / X14), this protein is Holo-[acyl-carrier-protein] synthase.